Here is a 217-residue protein sequence, read N- to C-terminus: Ribonuclease T (217 aa).

One can recognise an Exonuclease domain in the interval 20–194; that stretch reads VVIDIETAGF…YDTQQTANLF (175 aa). Positions 23, 25, 181, and 186 each coordinate Mg(2+). The Proton donor/acceptor role is filled by histidine 181.

It belongs to the RNase T family. In terms of assembly, homodimer. Mg(2+) is required as a cofactor.

In terms of biological role, trims short 3' overhangs of a variety of RNA species, leaving a one or two nucleotide 3' overhang. Responsible for the end-turnover of tRNA: specifically removes the terminal AMP residue from uncharged tRNA (tRNA-C-C-A). Also appears to be involved in tRNA biosynthesis. This chain is Ribonuclease T, found in Buchnera aphidicola subsp. Baizongia pistaciae (strain Bp).